The sequence spans 131 residues: Large ribosomal subunit protein bL19 (131 aa).

It belongs to the bacterial ribosomal protein bL19 family.

This protein is located at the 30S-50S ribosomal subunit interface and may play a role in the structure and function of the aminoacyl-tRNA binding site. The protein is Large ribosomal subunit protein bL19 of Anaeromyxobacter dehalogenans (strain 2CP-C).